A 254-amino-acid polypeptide reads, in one-letter code: Thiazole synthase (254 aa).

The active-site Schiff-base intermediate with DXP is the K96. 1-deoxy-D-xylulose 5-phosphate contacts are provided by residues G157, 183 to 184, and 205 to 206; these read AG and NT.

It belongs to the ThiG family. As to quaternary structure, homotetramer. Forms heterodimers with either ThiH or ThiS.

It is found in the cytoplasm. The enzyme catalyses [ThiS sulfur-carrier protein]-C-terminal-Gly-aminoethanethioate + 2-iminoacetate + 1-deoxy-D-xylulose 5-phosphate = [ThiS sulfur-carrier protein]-C-terminal Gly-Gly + 2-[(2R,5Z)-2-carboxy-4-methylthiazol-5(2H)-ylidene]ethyl phosphate + 2 H2O + H(+). It functions in the pathway cofactor biosynthesis; thiamine diphosphate biosynthesis. Functionally, catalyzes the rearrangement of 1-deoxy-D-xylulose 5-phosphate (DXP) to produce the thiazole phosphate moiety of thiamine. Sulfur is provided by the thiocarboxylate moiety of the carrier protein ThiS. In vitro, sulfur can be provided by H(2)S. The polypeptide is Thiazole synthase (Clostridium kluyveri (strain ATCC 8527 / DSM 555 / NBRC 12016 / NCIMB 10680 / K1)).